The primary structure comprises 466 residues: Putative chitinase 2 (466 aa).

An N-terminal signal peptide occupies residues 1–17 (MYLTIWLVPLLAVGTWG). One can recognise a GH18 domain in the interval 20 to 380 (FNRFCHYNSW…MAVIHGLNAY (361 aa)). An intrachain disulfide couples Cys-24 to Cys-49. Glu-141 (proton donor) is an active-site residue. Positions 395 to 447 (YNKKILRARVSLRNYRRRNQQGKVAEMEQRIRNLEQELQQSMGNMAYERQQAQ) form a coiled coil.

It belongs to the glycosyl hydrolase 18 family. As to expression, prismatic layer of shell (at protein level). Expressed primarily in the mantle with highest level in the mantle edge and lower level in the mantle pallium.

It localises to the secreted. The enzyme catalyses Random endo-hydrolysis of N-acetyl-beta-D-glucosaminide (1-&gt;4)-beta-linkages in chitin and chitodextrins.. In Margaritifera margaritifera (Freshwater pearl mussel), this protein is Putative chitinase 2.